The chain runs to 286 residues: Pantothenate synthetase (286 aa).

Residue 30–37 (MGNLHEGH) participates in ATP binding. Residue His37 is the Proton donor of the active site. Residue Gln61 coordinates (R)-pantoate. Gln61 provides a ligand contact to beta-alanine. 149-152 (GRKD) is an ATP binding site. Position 155 (Gln155) interacts with (R)-pantoate. ATP is bound by residues Val178 and 186–189 (MSSR).

It belongs to the pantothenate synthetase family. As to quaternary structure, homodimer.

The protein localises to the cytoplasm. It catalyses the reaction (R)-pantoate + beta-alanine + ATP = (R)-pantothenate + AMP + diphosphate + H(+). Its pathway is cofactor biosynthesis; (R)-pantothenate biosynthesis; (R)-pantothenate from (R)-pantoate and beta-alanine: step 1/1. Its function is as follows. Catalyzes the condensation of pantoate with beta-alanine in an ATP-dependent reaction via a pantoyl-adenylate intermediate. The chain is Pantothenate synthetase from Alkalilimnicola ehrlichii (strain ATCC BAA-1101 / DSM 17681 / MLHE-1).